Reading from the N-terminus, the 118-residue chain is NADH-ubiquinone oxidoreductase chain 3 (118 aa).

The next 3 membrane-spanning stretches (helical) occupy residues 7-27 (ICIS…VPFL), 62-82 (LVSI…PWAV), and 87-107 (IDLF…IGFL).

This sequence belongs to the complex I subunit 3 family.

The protein localises to the mitochondrion membrane. It carries out the reaction a ubiquinone + NADH + 5 H(+)(in) = a ubiquinol + NAD(+) + 4 H(+)(out). In terms of biological role, core subunit of the mitochondrial membrane respiratory chain NADH dehydrogenase (Complex I) that is believed to belong to the minimal assembly required for catalysis. Complex I functions in the transfer of electrons from NADH to the respiratory chain. The immediate electron acceptor for the enzyme is believed to be ubiquinone. This chain is NADH-ubiquinone oxidoreductase chain 3 (ND3), found in Oenothera berteroana (Bertero's evening primrose).